A 175-amino-acid polypeptide reads, in one-letter code: Large ribosomal subunit protein uL10 (175 aa).

This sequence belongs to the universal ribosomal protein uL10 family. As to quaternary structure, part of the ribosomal stalk of the 50S ribosomal subunit. The N-terminus interacts with L11 and the large rRNA to form the base of the stalk. The C-terminus forms an elongated spine to which L12 dimers bind in a sequential fashion forming a multimeric L10(L12)X complex.

Functionally, forms part of the ribosomal stalk, playing a central role in the interaction of the ribosome with GTP-bound translation factors. In Prochlorococcus marinus (strain MIT 9515), this protein is Large ribosomal subunit protein uL10.